Here is a 203-residue protein sequence, read N- to C-terminus: Superoxide dismutase [Mn] (203 aa).

Mn(2+)-binding residues include His27, His81, Asp164, and His168.

This sequence belongs to the iron/manganese superoxide dismutase family. Homodimer. Mn(2+) serves as cofactor.

The catalysed reaction is 2 superoxide + 2 H(+) = H2O2 + O2. Destroys superoxide anion radicals which are normally produced within the cells and which are toxic to biological systems. Partially complements double sodA-sodB deletions in E.coli. The chain is Superoxide dismutase [Mn] from Pseudomonas aeruginosa (strain ATCC 15692 / DSM 22644 / CIP 104116 / JCM 14847 / LMG 12228 / 1C / PRS 101 / PAO1).